A 2499-amino-acid chain; its full sequence is MIEGNFEKNNDNQVAIVGLGLRLPGNSGSPLEFWKNLLDGFDGIVDSNQRWSDTLHSIGEISNKNAGLIDLEENWHSFEPLFFGINPTDAKQIDPQIKLMLKLTWEAFEDASIDPLKLRGTNTSVFVGAANTDYSLINFEQNEAPINIFNGTLSAFANRISYCFDLRGTSLTLDTACSSSLNAVHLGYESIVNGKSNYSVVAGCNILLNPYITRSFHSINITGKSGRCNSFDESADGFVRSEGVVVLILKRLSLAIQDGDQIYCVMKGSSSNVDGTFKKTNFFAPSKNAQSTNIKNAFLSSNGAMKYQDIDFFELHSTGTQVGDPIEVEAVADIFKNVKQEPLLIGSVKSNIGHLEPASGVASLAKVCLMFKHRQFVKNIHFNNPNPNIKFKEWNVKVCTETTAFPDRQVSMAINSFGITGSNACVLLSEYIKPSEIKNQTSMKLNEKSKLLIPISTNSKKSLEQFKSKLLEEIDTYSESLTFEEFAMFQVYSKTTKLSQRSVLIGNDWNDLKIDINEIISTKNNKSGNIIKSNDINPPLVFSFCGQGPQYSKMGLNLYQNEPIFKEFMDLLDSILFKYFGYSIIQKLRSINDDPILINEPILALPSIFMIQISLYKLYLHWGITPSIIVGHSLGEVASAFCSGMIDLETACFVIYKRATIQNKTNGSGRLLAISLNLEEFNNQFSKEYPEIEISCFNSPSSIVVCGNELDILNISKSLKEKQIFNSLLGTSSAFHSSKQDIIKDEIIESTNHIQSRPPSITIFSTVTSNKFDKNTPYDSNYIFDNIRKPVLFQQTIENIFKYIESNDLGNSVIFLELSPHPTLNHYVKEMIPKNSNYFLNKDSISVLSSLNKKKEDINEIQSTISQLYCFGYNIDFSAQFKSEITSNSFKKCSYLIPHYQWDESLFWREGISSINNRKNGASINQLGNKNELSPHISYTSYIDIKEEPFRFLKDHQFRGKSLFPGVGYLDIILKLFPNQDLTIPLLEFKSQFVLTEGVKKTLTTNLYKSAKNEYRATFNFKDQTSGKWIQSANSRILMKSLDVTVKKVDVQSIRDQCNWSTLKREQLYDLIKNYSNISLLESFQRIEEASYGDNRCLCKVSLDPTSSYDNESFLNICIIDTCIHPCIFFDNPASSVFERIEHLKIYSSSVPLTAEDRVKQQYVYCYVELIKKYSDFIYFKTTCFLKDGTVLLHSPLVTIASTLSTNIDTNIECPNNQLFSQCLQPKDSILQSPLILKEYFNQQLQLQQSNIISISTLSSYLFSTLKKILNNLTTDEFQNGSLEEFIGKYSYILEEIQEASTFRSNLIFLSINFLLTHHKHIDQNQVSNFLLNNIPNELLVLDTIVSNKGISHIGIYQHQLILDIISKSIIPIVNEKIVFRILEIGCGVGELTKLINDKLESILNDNPSYNIDIEFVFSDYTDSKVLLIKERLFNSKKSCFFKIIDLNKQLQEQSFSPSYYDLIILSNTTNQIKDIKTSISFINEILTPNGHLLILDTNFIQTSIDEDYYLENYKQWLSFNYLNSGSGAMKLNQWNQLLINDLKFNNFICSTGEIEPYLIQVQKSNLSNSINSVSKEHSSEYDQIIIFGTCDEINIGSSFYGLVPIAINSIDKFKEHVKLQPLTDKSLILFIESVNLLTVDNFNQVSMNYIEINQHLLKNEISGCKHILISRNVNFETSNLFGSSLIGSFRYFCEFNQLNIYSFEFEGNNILSGDGGDKLFNIIQELSNSNKHSQNEFSIRSDGKIYYERIKLESNLKLKYKSKSYIENKNELVSRLKPDLTFALEAVLPLNPNFVEVKVMASGVNFKDFLVYRQLINMANSNENGDPSKPQFGYELSGIVTKVGKNVTKFKVGDHVMGGAFHTFSSSVHVDQDRIELKPSNISWFEASQSLVYLTSYCSLFELGRLDLYGSTETVLIHSGSGGIGLSCIDLLQVYGFKGFLFVTVGSEEKKQFLKDRYGNFITEIYSTKNTDYEYLIKEKLIELKAPSQEYGSFSMICVDLIINTLSADYMDANFNCLSQGGRIIDLSITHMTTTDTTDFYKFRNHIGYMTYESVIAGFRKHKHVLKIIVDLLASGKLKTIPFNVYPVTKIKEAIESLGDRKHIGKNIVNFNDPEGIDLIDCPEFSNNHNFIHPSSNYKIHQDTLGKTILITGQAGLSDTIIKWIREKRSDSIESIIVLSKSPIKFELERAIGRIRSTNLKIYFKQVDISDEKLLLKSINQLFEENKDIKPIESIFHNAFSPAECEPLEIDMNHLISSHSAKSMGAYNLHKLSLNWPIKQFVLSSSVTSILGSQRQCGYVASNCFIDALSRHRKSLNLPCISINWGLLGGGGFAARNDAVFKLFELQGSVGISKDLVWGSLDLLLQNQNESTNKMVASFEFHATCKTYKYHKLSYKLDYFLNPIISKESVTDEKEFSIRQDIVDKFASLLSTDQSKLNLDIKVIDYGADSLLVVEVKNWADNIFARNILSMPEIQNSTINQIINIVTTKVSNLPSKKK.

Positions 11 to 430 (DNQVAIVGLG…GSNACVLLSE (420 aa)) constitute a Ketosynthase family 3 (KS3) domain. Catalysis depends on for beta-ketoacyl synthase activity residues Cys-177, His-316, and His-354. An acyl/malonyl transferases region spans residues 623–656 (GITPSIIVGHSLGEVASAFCSGMIDLETACFVIY). Residue Ser-633 is the For acyl/malonyl transferase activity of the active site. Positions 924 to 1044 (INQLGNKNEL…SRILMKSLDV (121 aa)) are N-terminal hotdog fold. A PKS/mFAS DH domain is found at 924-1209 (INQLGNKNEL…IASTLSTNID (286 aa)). His-956 (proton acceptor; for dehydratase activity) is an active-site residue. Residues 1059–1209 (NWSTLKREQL…IASTLSTNID (151 aa)) form a C-terminal hotdog fold region. The Proton donor; for dehydratase activity role is filled by Asp-1121. Residues 2414–2491 (EKEFSIRQDI…QIINIVTTKV (78 aa)) form the Carrier domain. At Ser-2451 the chain carries O-(pantetheine 4'-phosphoryl)serine.

Pantetheine 4'-phosphate is required as a cofactor.

Functionally, probable polyketide synthase. The protein is Probable polyketide synthase 23 (pks23) of Dictyostelium discoideum (Social amoeba).